A 283-amino-acid chain; its full sequence is Pantothenate synthetase (283 aa).

Residue 30–37 participates in ATP binding; the sequence is MGNLHDGH. H37 acts as the Proton donor in catalysis. Q61 lines the (R)-pantoate pocket. Q61 is a beta-alanine binding site. 149–152 lines the ATP pocket; that stretch reads GEKD. Q155 is a (R)-pantoate binding site. Position 186–189 (186–189) interacts with ATP; that stretch reads LSSR.

This sequence belongs to the pantothenate synthetase family. As to quaternary structure, homodimer.

It localises to the cytoplasm. The catalysed reaction is (R)-pantoate + beta-alanine + ATP = (R)-pantothenate + AMP + diphosphate + H(+). Its pathway is cofactor biosynthesis; (R)-pantothenate biosynthesis; (R)-pantothenate from (R)-pantoate and beta-alanine: step 1/1. In terms of biological role, catalyzes the condensation of pantoate with beta-alanine in an ATP-dependent reaction via a pantoyl-adenylate intermediate. The protein is Pantothenate synthetase of Escherichia coli O6:K15:H31 (strain 536 / UPEC).